A 333-amino-acid chain; its full sequence is G-protein coupled receptor 146 (333 aa).

The Extracellular segment spans residues 1–22; the sequence is MWSCGPLNSTAWAEEPLCRNLR. An N-linked (GlcNAc...) asparagine glycan is attached at Asn8. The helical transmembrane segment at 23–43 threads the bilayer; the sequence is LGLWVLSLLYLGAGVPVSLGY. Residues 44-64 lie on the Cytoplasmic side of the membrane; sequence NALLVLANLASKNTMTMPDVY. A helical membrane pass occupies residues 65–85; the sequence is FVNMAVAGLVLTALAPAYLLG. Over 86 to 101 the chain is Extracellular; that stretch reads PAHSRWALWSLSSEAH. Residues 102–122 form a helical membrane-spanning segment; the sequence is VTLLILFNVASLVTMYSTALL. Over 123–145 the chain is Cytoplasmic; the sequence is SLDYYIERALPRTYMASVYNTRH. The chain crosses the membrane as a helical span at residues 146 to 166; that stretch reads VCGFVWGGAVLTSFSSLLFYI. At 167–188 the chain is on the extracellular side; sequence CSHVSSRIAECARMQNTEAADA. A helical transmembrane segment spans residues 189-209; the sequence is ILVLIGYVVPGLAVLYALALI. Residues 210 to 232 lie on the Cytoplasmic side of the membrane; that stretch reads SRIGKEDTPLDQDTSRLDPSVHR. The chain crosses the membrane as a helical span at residues 233–253; sequence LLVATVCTQFGLWTPYYLSLG. The Extracellular segment spans residues 254–277; it reads HTVLTSRGRTVEGHYLGILQVAKD. The helical transmembrane segment at 278-298 threads the bilayer; that stretch reads LAKFLAFSSSSVTPLLYRYIN. Residues 299-333 lie on the Cytoplasmic side of the membrane; that stretch reads KAFPGKLRRLMKKMHCGRRHCSPDPSGIQQVMAQA.

This sequence belongs to the G-protein coupled receptor 1 family.

It is found in the cell membrane. Its function is as follows. GPCR receptor required for the regulation of plasma cholesterol levels. Receptor for CHLSN, a gut derived hormone which mediates an inhibitory effect of intestinal cholesterol absorption on hepatic cholesterol synthesis. Cholesin-binding exerts an antagonistic effect by inhibiting PKA signaling and suppressing SREBF2-controlled cholesterol in the liver. This is G-protein coupled receptor 146 (Gpr146) from Mus musculus (Mouse).